Consider the following 440-residue polypeptide: Transposon Ty1-JR1 Gag polyprotein (440 aa).

Over residues 1–16 the composition is skewed to low complexity; the sequence is MESQQLSQHSHISHGS. Disordered stretches follow at residues 1–93, 126–173, and 352–440; these read MESQ…MMTQ, PQSQ…RPPP, and GSRN…PGTY. Polar residues-rich tracts occupy residues 48 to 60 and 127 to 152; these read TKANSQQTTTPAS and QSQFPQYPSSVGTPLSTPSPESGNTF. Residues 153–165 show a composition bias toward low complexity; the sequence is TDSSSADSDMTST. The tract at residues 299–401 is RNA-binding; that stretch reads NNGIHINNKV…NSKSKTARAH (103 aa). The span at 402-418 shows a compositional bias: low complexity; that stretch reads NVSTSNNSPSTDNDSIS. At S416 the chain carries Phosphoserine. The segment covering 419-428 has biased composition (polar residues); it reads KSTTEPIQLN. The span at 429-440 shows a compositional bias: basic and acidic residues; it reads NKHDLHLRPGTY.

Homotrimer.

The protein localises to the cytoplasm. In terms of biological role, capsid protein (CA) is the structural component of the virus-like particle (VLP), forming the shell that encapsulates the retrotransposons dimeric RNA genome. The particles are assembled from trimer-clustered units and there are holes in the capsid shells that allow for the diffusion of macromolecules. CA also has nucleocapsid-like chaperone activity, promoting primer tRNA(i)-Met annealing to the multipartite primer-binding site (PBS), dimerization of Ty1 RNA and initiation of reverse transcription. In Saccharomyces cerevisiae (strain ATCC 204508 / S288c) (Baker's yeast), this protein is Transposon Ty1-JR1 Gag polyprotein (TY1A-JR1).